Here is a 110-residue protein sequence, read N- to C-terminus: Proline-rich protein 15-like protein A (110 aa).

Disordered regions lie at residues 29-51 (IAGDHSSNGGEAPGTTDAATDSQ) and 65-110 (TKGR…KSGK). The segment covering 65–85 (TKGRHVKVSHSGRFKEKKRIR) has biased composition (basic residues). A compositionally biased stretch (polar residues) spans 100–110 (TTANENNKSGK).

Belongs to the PRR15 family.

The protein is Proline-rich protein 15-like protein A (prr15la) of Danio rerio (Zebrafish).